Here is a 372-residue protein sequence, read N- to C-terminus: N-methyl-L-tryptophan oxidase (372 aa).

4-34 (DLIIIGSGSVGAAAGYYATRAGLNVLMTDAH) contributes to the FAD binding site. At cysteine 308 the chain carries S-8alpha-FAD cysteine.

Belongs to the MSOX/MTOX family. MTOX subfamily. As to quaternary structure, monomer. It depends on FAD as a cofactor.

The enzyme catalyses N(alpha)-methyl-L-tryptophan + O2 + H2O = L-tryptophan + formaldehyde + H2O2. Its function is as follows. Catalyzes the oxidative demethylation of N-methyl-L-tryptophan. The sequence is that of N-methyl-L-tryptophan oxidase from Escherichia coli O127:H6 (strain E2348/69 / EPEC).